The chain runs to 81 residues: Small cysteine-rich protein 1 1 (81 aa).

The N-terminal stretch at 1 to 19 is a signal peptide; sequence MGVHFNICLLLLLVATISS. Positions 20–39 are excised as a propeptide; the sequence is QTLKATEKDDSTDENPFGIY.

Belongs to the Cnidaria small cysteine-rich protein (SCRiP) family. alpha subfamily. The basic myotoxic domain of rattlesnake crotamine toxins (with 6 Cys residues) has been detected in this protein. However, this protein contains 2 additional Cys at the C-terminal region. Hence, this protein may contain 4 disulfide bonds instead of the 3 suggested by the myotoxin domain.

The protein localises to the secreted. Its subcellular location is the nematocyst. Its function is as follows. Induces neurotoxic symptoms on zebrafish. Has also been claimed to be implied in calcification, but tests on homolog proteins suggest that proteins of this family have a neurotoxic function and not a calcification function. The protein is Small cysteine-rich protein 1 1 of Montipora capitata (Rice coral).